We begin with the raw amino-acid sequence, 145 residues long: Putative nickel-responsive regulator (145 aa).

Ni(2+) contacts are provided by His77, His88, His90, and Cys96.

It belongs to the transcriptional regulatory CopG/NikR family. The cofactor is Ni(2+).

Transcriptional regulator. This is Putative nickel-responsive regulator from Rhizobium rhizogenes (strain K84 / ATCC BAA-868) (Agrobacterium radiobacter).